Here is a 158-residue protein sequence, read N- to C-terminus: Transcriptional repressor NrdR (158 aa).

Residues 1–20 (MRCPYCQSEDTQVKDSRPAE) form a disordered region. A zinc finger lies at 3-34 (CPYCQSEDTQVKDSRPAEDGAVIRRRRVCSVC). The segment covering 11–20 (TQVKDSRPAE) has biased composition (basic and acidic residues). Residues 49–139 (LMVVKKSGRR…VYRNFSKAVD (91 aa)) enclose the ATP-cone domain.

The protein belongs to the NrdR family. Requires Zn(2+) as cofactor.

In terms of biological role, negatively regulates transcription of bacterial ribonucleotide reductase nrd genes and operons by binding to NrdR-boxes. The protein is Transcriptional repressor NrdR of Brucella anthropi (strain ATCC 49188 / DSM 6882 / CCUG 24695 / JCM 21032 / LMG 3331 / NBRC 15819 / NCTC 12168 / Alc 37) (Ochrobactrum anthropi).